Here is a 605-residue protein sequence, read N- to C-terminus: Golgi-associated RAB2 interactor protein 3 (605 aa).

Disordered regions lie at residues 234-265 and 407-529; these read GEGIQHASHGTASAASPSTSTPGAAEGGAART and YMSE…ALQK. Residues 239–265 show a composition bias toward low complexity; it reads HASHGTASAASPSTSTPGAAEGGAART. A compositionally biased stretch (basic residues) spans 434–457; sequence KKDRHPSRKSSHHRKAGESHRRRA. The Bipartite nuclear localization signal motif lies at 441–458; it reads RKSSHHRKAGESHRRRAG. A compositionally biased stretch (polar residues) spans 463 to 473; the sequence is KASSHRSASGH. The segment covering 475-484 has biased composition (basic and acidic residues); it reads NTRDDKKEKG. The span at 489–500 shows a compositional bias: basic residues; that stretch reads RGKRHGSSRKSS. Residues 513–526 are compositionally biased toward polar residues; it reads QELGKNQSASSTGA. Residue serine 592 is modified to Phosphoserine.

It belongs to the GARIN family. Interacts (via N-terminus) with RAB2B (in GTP-bound form). Interacts with FRG1. As to expression, expressed in adult spermatocytes and spermatids (at protein level).

It localises to the golgi apparatus. Its subcellular location is the nucleus. The protein resides in the cajal body. In terms of biological role, may be involved in RNA biogenesis. In Homo sapiens (Human), this protein is Golgi-associated RAB2 interactor protein 3.